A 71-amino-acid polypeptide reads, in one-letter code: Pro-MCH (71 aa).

A signal peptide spans A1–G20.

Belongs to the melanin-concentrating hormone family.

The protein resides in the secreted. This Hylobates lar (Lar gibbon) protein is Pro-MCH (PMCH).